Consider the following 151-residue polypeptide: Large ribosomal subunit protein uL22 (151 aa).

Residues 1–25 are disordered; the sequence is MARINYSVKEDPETTSKAMGSELHI.

This sequence belongs to the universal ribosomal protein uL22 family. Part of the 50S ribosomal subunit.

This protein binds specifically to 23S rRNA. It makes multiple contacts with different domains of the 23S rRNA in the assembled 50S subunit and ribosome. In terms of biological role, the globular domain of the protein is located near the polypeptide exit tunnel on the outside of the subunit, while an extended beta-hairpin is found that lines the wall of the exit tunnel in the center of the 70S ribosome. In Methanosarcina barkeri (strain Fusaro / DSM 804), this protein is Large ribosomal subunit protein uL22.